A 466-amino-acid chain; its full sequence is Glutamate--tRNA ligase (466 aa).

Positions 10–20 (PSPTGYLHIGG) match the 'HIGH' region motif. The 'KMSKS' region motif lies at 237–241 (RLSKR). Residue lysine 240 coordinates ATP.

This sequence belongs to the class-I aminoacyl-tRNA synthetase family. Glutamate--tRNA ligase type 1 subfamily. As to quaternary structure, monomer.

The protein localises to the cytoplasm. It catalyses the reaction tRNA(Glu) + L-glutamate + ATP = L-glutamyl-tRNA(Glu) + AMP + diphosphate. Its function is as follows. Catalyzes the attachment of glutamate to tRNA(Glu) in a two-step reaction: glutamate is first activated by ATP to form Glu-AMP and then transferred to the acceptor end of tRNA(Glu). The chain is Glutamate--tRNA ligase from Syntrophotalea carbinolica (strain DSM 2380 / NBRC 103641 / GraBd1) (Pelobacter carbinolicus).